A 426-amino-acid polypeptide reads, in one-letter code: Histidine--tRNA ligase (426 aa).

It belongs to the class-II aminoacyl-tRNA synthetase family.

The protein resides in the cytoplasm. The catalysed reaction is tRNA(His) + L-histidine + ATP = L-histidyl-tRNA(His) + AMP + diphosphate + H(+). The chain is Histidine--tRNA ligase from Saccharolobus islandicus (strain M.16.27) (Sulfolobus islandicus).